The following is a 498-amino-acid chain: MKLNKMFLVGALLSLGFASCSKEGNGPAPDSSSTADTHMSVSMSLPQHNRAGDNDYNPIGEYGGVDKINDLTVYVVGDGKIDVRKLSTADLQVNQGASTTSIVTAPFQVKSGEKTVYAIVNITPKVEAALNAATNAADLKVAYEAAYAAFSDAGSEIATLVNNQDQMIMSGKPVVQTILPNVSAANASVQNKVPIIVKRAAIRASMTITQQPVNGAYEIKALRPGNVEVVIATVSDLKWSVAQYEKKYYLQQKDNALSPAASFVPASTNDYNGANGAMKHYDYSQLANRITVHQLNAPYSVTDVPNVAYKYVSETTHADNDYRKGNTTYILVKGKLKPVAAMWADGEQAAYQEGGDLFLGLVTGKFYANEANANAANPASGGAGNPRVVTYKAAAVYYYAWLNPNTLDPTTWTMSPARRNNIYNVNISKFRNIGLSGNPFVPTDPDPNNPDTPDNPDTPDPEDPDTPNPEEPLPVQKTYMVVDVTVTPWTLHNYDIEF.

Residues 1–19 form the signal peptide; sequence MKLNKMFLVGALLSLGFAS. The N-palmitoyl cysteine moiety is linked to residue cysteine 20. The S-diacylglycerol cysteine moiety is linked to residue cysteine 20. A propeptide spanning residues 20 to 50 is cleaved from the precursor; that stretch reads CSKEGNGPAPDSSSTADTHMSVSMSLPQHNR. A disordered region spans residues 436 to 476; it reads SGNPFVPTDPDPNNPDTPDNPDTPDPEDPDTPNPEEPLPVQ.

Belongs to the bacteroidetes fimbrillin superfamily. FimA/Mfa1 family. Structural component of the fimbrial stalk. Minor fimbriae are composed of a structural subunit, such as the 53 kDa fimbrillin, and the accessory subunits Mfa3, Mfa4 and Mfa5. Fimbrium assembly occurs by linear, head-to-tail oligomerization of fimbrial subunits. This is mediated via insertion of a C-terminal beta-strand from one subunit into a groove in the N-terminal domain of the following subunit.

Its subcellular location is the fimbrium. The protein resides in the cell outer membrane. Functionally, structural subunit of the minor fimbriae. These filamentous pili are attached to the cell surface; they mediate biofilm formation, adhesion onto host cells and onto other bacteria that are part of the oral microbiome. They play an important role in invasion of periodontal tissues and are recognized as major virulence factors. Mfa1 orthologs from different strains have highly divergent sequences, and this correlates with pathogenicity. The sequence is that of Minor fimbrium subunit Mfa1 from Porphyromonas gingivalis (Bacteroides gingivalis).